The chain runs to 116 residues: NADH-ubiquinone oxidoreductase chain 3 (116 aa).

3 consecutive transmembrane segments (helical) span residues 3–23, 56–76, and 87–107; these read LIMTILTITAALSLILATVSF, FFLVAILFLLFDLEIALLLPL, and GTFFWATTVLILLTLGLIYEW.

This sequence belongs to the complex I subunit 3 family.

Its subcellular location is the mitochondrion membrane. The catalysed reaction is a ubiquinone + NADH + 5 H(+)(in) = a ubiquinol + NAD(+) + 4 H(+)(out). Functionally, core subunit of the mitochondrial membrane respiratory chain NADH dehydrogenase (Complex I) that is believed to belong to the minimal assembly required for catalysis. Complex I functions in the transfer of electrons from NADH to the respiratory chain. The immediate electron acceptor for the enzyme is believed to be ubiquinone. This Carassius auratus (Goldfish) protein is NADH-ubiquinone oxidoreductase chain 3 (MT-ND3).